Reading from the N-terminus, the 210-residue chain is Replication protein RepB (210 aa).

This sequence belongs to the Gram-positive plasmids replication protein type 2 family.

Its function is as follows. Is essential for plasmid replication. Nicks the positive strand at the plus origin of replication. In Streptococcus agalactiae, this protein is Replication protein RepB (repB).